A 365-amino-acid chain; its full sequence is Chorismate synthase (365 aa).

The tract at residues 41-61 (IQKELDRRRPGQSEVSTPRHE) is disordered. Position 48 (R48) interacts with NADP(+). FMN contacts are provided by residues 125-127 (RSS), G285, 300-304 (KPTPS), and R327.

This sequence belongs to the chorismate synthase family. FMNH2 is required as a cofactor.

The catalysed reaction is 5-O-(1-carboxyvinyl)-3-phosphoshikimate = chorismate + phosphate. Its pathway is metabolic intermediate biosynthesis; chorismate biosynthesis; chorismate from D-erythrose 4-phosphate and phosphoenolpyruvate: step 7/7. In terms of biological role, catalyzes the anti-1,4-elimination of the C-3 phosphate and the C-6 proR hydrogen from 5-enolpyruvylshikimate-3-phosphate (EPSP) to yield chorismate, which is the branch point compound that serves as the starting substrate for the three terminal pathways of aromatic amino acid biosynthesis. This reaction introduces a second double bond into the aromatic ring system. The protein is Chorismate synthase of Methanosarcina barkeri (strain Fusaro / DSM 804).